A 190-amino-acid chain; its full sequence is High affinity copper uptake protein 1 (190 aa).

Residues 1 to 35 are disordered; the sequence is MDHSHHMGMSYMDSNSTMQPSHHHPTTSASHSHGG. Residues 1–61 are Extracellular-facing; the sequence is MDHSHHMGMS…KNVELLFSGL (61 aa). The Bis-His motif motif lies at 5-6; it reads HH. The short motif at 7–12 is the Methionine segments (Mets) motif element; that stretch reads MGMSYM. A glycan (N-linked (GlcNAc...) asparagine) is linked at Asn15. The segment covering 26-35 has biased composition (low complexity); the sequence is TTSASHSHGG. Thr27 carries O-linked (GalNAc...) threonine glycosylation. A helical membrane pass occupies residues 62 to 82; that stretch reads VINTAGEMAGAFVAVFLLAMF. Topologically, residues 83–132 are cytoplasmic; the sequence is YEGLKIARESLLRKSQVSIRYNSMPVPGPNGTILMETHKTVGQQMLSFPH. Thr114 is modified (phosphothreonine). The helical transmembrane segment at 133–153 threads the bilayer; that stretch reads LLQTVLHIIQVVISYFLMLIF. Residues 154–156 are Extracellular-facing; sequence MTY. A helical membrane pass occupies residues 157–177; that stretch reads NGYLCIAVAAGAGTGYFLFSW. Topologically, residues 178 to 190 are cytoplasmic; sequence KKAVVVDITEHCH. Cys189 is modified (cysteine sulfenic acid (-SOH)).

This sequence belongs to the copper transporter (Ctr) (TC 1.A.56) family. SLC31A subfamily. Homotrimer; is stabilized by cisplatin via interactions between cisplatin and the methionine-rich clusters, and could be crucial for the copper(2+) reduction process and copper(1+) stabilization. Heterotrimer between SLC31A1, CCS and SOD1; this heterotrimer is copper(1+)-mediated and its maintenance is regulated through SOD1 activation. Interacts with KDR; this interaction is induced upon VEGFA stimulation leading to SLC31A1 and KDR subsequent co-internalization to early endosomes, thereby activating KDR downstream signaling in endothelial cells. Interacts (via C-terminal domain) with ATOX1 (via dimer form); this interaction improves ATOX1 stability and controls intracellular copper(1+) levels. Interacts with SLC31A2; this interaction stabilizes SLC31A2 and protects its from ubiquitination and degradation. Interacts (via C-terminal domain) with CCS; this interaction is copper(1+)-mediated. Post-translationally, O-Glycosylation at Thr-27 protects from proteolytic cleavage in the N-terminal extracellular domain. Proteolytic cleavage, leading to a truncated form, is facilitated by SLC31A2 and initiated preferentially by CTSL and to a minor extend by CTSB in endolysosomal compartments. In vitro, is cleaved by CTSL/cathepsin L between residues 8 and 9 from the amino terminus. A post-CTSL/cathepsin L processing occurs to yield to the fully truncated form. In terms of processing, sulfenylated at Cys-189 after stimulation with VEGFA, which induces SLC31A1-KDR disulfide bond formation and their co-internalization to early endosomes, driving to a sustained VEGFR2 signaling.

It localises to the cell membrane. It is found in the early endosome membrane. The protein resides in the recycling endosome membrane. The protein localises to the apical cell membrane. Its subcellular location is the late endosome membrane. It localises to the basolateral cell membrane. It catalyses the reaction Ag(+)(out) = Ag(+)(in). It carries out the reaction Cu(+)(out) = Cu(+)(in). With respect to regulation, copper(1+) transport is stimulated by extracellular acidic pH and high potassium ions concentrations. Copper(1+) import is regulated by a copper(1+)-dependent recycling of SLC31A1. Its function is as follows. Uniporter that mediates the transport of copper(1+) from the extracellular space to the cytoplasm, across the plasma membrane and delivers directly copper(1+) to specific chaperone such as ATOX1, via a copper(1+)- mediated transient interaction between the C-terminal domain and a copper(1+) chaperone, thus controlling intracellular copper(1+) levels. May function in copper(1+) import from the apical membrane thus may drive intestinal copper absorption. The copper(1+) transport mechanism is sodium-independent, saturable and of high-affinity. Also mediates the uptake of silver(1+). May function in the influx of the platinum-containing chemotherapeutic agents. The platinum-containing chemotherapeutic agents uptake is saturable. In vitro, mediates the transport of cadmium(2+) into cells. Also participates in the first step of copper(2+) acquisition by cells through a direct transfer of copper(2+) from copper(2+) carriers in blood, such as ALB to the N-terminal domain of SLC31A1, leading to copper(2+) reduction and probably followed by copper(1+) stabilization. In addition, functions as a redox sensor to promote angiogenesis in endothelial cells, in a copper(1+) transport independent manner, by transmitting the VEGF-induced ROS signal through a sulfenylation at Cys-189 leadin g to a subsequent disulfide bond formation between SLC31A1 and KDR. The SLC31A1-KDR complex is then co-internalized to early endosomes, driving a sustained VEGFR2 signaling. In terms of biological role, mobilizes copper(1+) out of the endosomal compartment, making copper(1+) available for export out of the cells. This chain is High affinity copper uptake protein 1, found in Homo sapiens (Human).